The sequence spans 240 residues: UPF0502 protein Veis_2102 (240 aa).

This sequence belongs to the UPF0502 family.

The polypeptide is UPF0502 protein Veis_2102 (Verminephrobacter eiseniae (strain EF01-2)).